Consider the following 225-residue polypeptide: Myelin-associated neurite-outgrowth inhibitor (225 aa).

At 1 to 58 (MNPVYSPGSSGVPYANAKGIGYPAGFPMGYAAAAPAYSPNMYAGPNPAFQQELEHPAH) the chain is on the cytoplasmic side. A helical transmembrane segment spans residues 59-75 (VSSGVQMFMFGHAFSVA). Over 76-173 (RNGAIPSGYT…PAPIQSPRGN (98 aa)) the chain is Extracellular. The chain crosses the membrane as a helical span at residues 174 to 193 (GVAMGMVAGTTMAMSAGTLL). The Cytoplasmic portion of the chain corresponds to 194–225 (TSHYPSPVAPQVTMPTYRPPGTPTYSYVPPQW).

Belongs to the FAM168 family.

Its subcellular location is the cytoplasm. It localises to the perinuclear region. It is found in the cell membrane. The protein localises to the cell projection. The protein resides in the axon. Its function is as follows. Inhibitor of neuronal axonal outgrowth. This chain is Myelin-associated neurite-outgrowth inhibitor (fam168b), found in Xenopus laevis (African clawed frog).